We begin with the raw amino-acid sequence, 565 residues long: NAD-dependent malic enzyme (565 aa).

The Proton donor role is filled by tyrosine 104. Arginine 157 is an NAD(+) binding site. Catalysis depends on lysine 175, which acts as the Proton acceptor. A divalent metal cation-binding residues include glutamate 246, aspartate 247, and aspartate 270. NAD(+)-binding residues include aspartate 270 and asparagine 418.

The protein belongs to the malic enzymes family. Homotetramer. Mg(2+) serves as cofactor. It depends on Mn(2+) as a cofactor.

It catalyses the reaction (S)-malate + NAD(+) = pyruvate + CO2 + NADH. It carries out the reaction oxaloacetate + H(+) = pyruvate + CO2. This chain is NAD-dependent malic enzyme, found in Pectobacterium atrosepticum (strain SCRI 1043 / ATCC BAA-672) (Erwinia carotovora subsp. atroseptica).